The sequence spans 411 residues: Z-DNA-binding protein 1 (411 aa).

Z-binding domains are found at residues 8-70 and 84-148; these read LSTG…SIGG and SSAQ…HSRQ. Glycyl lysine isopeptide (Lys-Gly) (interchain with G-Cter in ubiquitin) cross-links involve residues Lys-17 and Lys-43. The segment at 60 to 86 is disordered; that stretch reads SPEPATWSIGGAASGDGAPAIPENSSA. 2 consecutive short sequence motifs (RIP homotypic interaction motif (RHIM)) follow at residues 188-205 and 237-261; these read NSNAIQIGHGNVIVREKA and YIYMDKSLLQQVQLGHHNEMSLVGD. Disordered stretches follow at residues 263–303 and 332–411; these read GKHP…EGDT and KGEV…LSKQ. Composition is skewed to polar residues over residues 268 to 292, 350 to 371, and 400 to 411; these read YSFSDSPPEVSTTTADPGASFNMQT, GTSSEATPPRSCQHTPSDSMLP, and IESSQDTGLSKQ.

In terms of assembly, homodimer. Interacts (via RIP homotypic interaction motif) with RIPK3; leading to RIPK3 activation and necroptosis; interaction is enhanced by CASP6. Interacts (via RIP homotypic interaction motif) with RIPK1. Component of the AIM2 PANoptosome complex, a multiprotein complex that drives inflammatory cell death (PANoptosis). (Microbial infection) Interacts (via RIP homotypic interaction motif) with murid herpesvirus protein RIR1 (via RIP homotypic interaction motif); leading to inhibition of ZBP1-dependent necroptosis. As to quaternary structure, (Microbial infection) Interacts with vaccinia virus E3 protein; leading to inhibit ZBP1-dependent necroptosis. Ubiquitinated; polyubiquitinated following influenza A virus (IAV) infection. Post-translationally, phosphorylated. In terms of tissue distribution, expressed in lung, spleen and liver. Lower levels were seen in heart, kidney and testis. Expression is greatly up-regulated in tumor stromal cells and activated macrophages.

The protein resides in the cytoplasm. It localises to the nucleus. With respect to regulation, ZBP1-dependent necroptosis is normally inhibited by RIPK1: RIPK1 inhibits the ZBP1-induced activation of RIPK3 via FADD-mediated recruitment of CASP8, which cleaves RIPK1 and limits TNF-induced necroptosis. Functionally, key innate sensor that recognizes and binds Z-RNA structures, which are produced by a number of viruses, such as herpesvirus, orthomyxovirus or flavivirus, and triggers different forms of cell death. ZBP1 acts as an essential mediator of pyroptosis, necroptosis and apoptosis (PANoptosis), an integral part of host defense against pathogens, by activating RIPK3, caspase-8 (CASP8), and the NLRP3 inflammasome. Key activator of necroptosis, a programmed cell death process in response to death-inducing TNF-alpha family members, via its ability to bind Z-RNA: once activated upon Z-RNA-binding, ZBP1 interacts and stimulates RIPK3 kinase, which phosphorylates and activates MLKL, triggering execution of programmed necrosis. In addition to TNF-induced necroptosis, necroptosis can also take place in the nucleus in response to orthomyxoviruses infection: ZBP1 recognizes and binds Z-RNA structures that are produced in infected nuclei by orthomyxoviruses, such as the influenza A virus (IAV), leading to ZBP1 activation, RIPK3 stimulation and subsequent MLKL phosphorylation, triggering disruption of the nuclear envelope and leakage of cellular DNA into the cytosol. ZBP1-dependent cell death in response to IAV infection promotes interleukin-1 alpha (IL1A) induction in an NLRP3-inflammasome-independent manner: IL1A expression is required for the optimal interleukin-1 beta (IL1B) production, and together, these cytokines promote infiltration of inflammatory neutrophils to the lung, leading to the formation of neutrophil extracellular traps. In addition to its direct role in driving necroptosis via its ability to sense Z-RNAs, also involved in PANoptosis triggered in response to bacterial infection: component of the AIM2 PANoptosome complex, a multiprotein complex that triggers PANoptosis. Also acts as the apical sensor of fungal infection responsible for activating PANoptosis. Involved in CASP8-mediated cell death via its interaction with RIPK1 but independently of its ability to sense Z-RNAs. In some cell types, also able to restrict viral replication by promoting cell death-independent responses. In response to flavivirus infection in neurons, promotes a cell death-independent pathway that restricts viral replication: together with RIPK3, promotes a death-independent transcriptional program that modifies the cellular metabolism via up-regulation expression of the enzyme ACOD1/IRG1 and production of the metabolite itaconate. Itaconate inhibits the activity of succinate dehydrogenase, generating a metabolic state in neurons that suppresses replication of viral genomes. The sequence is that of Z-DNA-binding protein 1 from Mus musculus (Mouse).